The primary structure comprises 160 residues: Small ribosomal subunit protein uS7 (160 aa).

It belongs to the universal ribosomal protein uS7 family. Part of the 30S ribosomal subunit. Contacts proteins S9 and S11.

Functionally, one of the primary rRNA binding proteins, it binds directly to 16S rRNA where it nucleates assembly of the head domain of the 30S subunit. Is located at the subunit interface close to the decoding center, probably blocks exit of the E-site tRNA. This Anaplasma marginale (strain Florida) protein is Small ribosomal subunit protein uS7.